Reading from the N-terminus, the 177-residue chain is LOB domain-containing protein 33 (177 aa).

The LOB domain maps to 6–108 (SSCGACKFLR…EEIEFLGSQM (103 aa)).

This sequence belongs to the LOB domain-containing protein family. As to expression, expressed in roots.

This chain is LOB domain-containing protein 33 (LBD33), found in Arabidopsis thaliana (Mouse-ear cress).